We begin with the raw amino-acid sequence, 1133 residues long: Probable cation-transporting ATPase 9 (1133 aa).

Residues 1 to 6 (MRVSSI) lie on the Cytoplasmic side of the membrane. A helical transmembrane segment spans residues 7–28 (EAEMENPIDVDKTDVEGELKIK). Over 29–34 (QVTLLR) the chain is Extracellular. Residues 35–53 (ENIVKKIVFFLVAIFCSDR) form a helical membrane-spanning segment. Over 54–167 (PSVLKKVFYE…IEINVPSFLT (114 aa)) the chain is Cytoplasmic. A helical transmembrane segment spans residues 168–190 (LMWREFKKPINFLLYFGIIVWGI). At 191–193 (EQM) the chain is on the extracellular side. A helical transmembrane segment spans residues 194-212 (YVSTAITVVFTTTINSLIC). The Cytoplasmic portion of the chain corresponds to 213–363 (IYIRGVMQKL…PFNKKFQQQA (151 aa)). Residues 364-383 (VKLTILMATLLLIGFLSTLS) form a helical membrane-spanning segment. Over 384–396 (RLLDIELPPLFIA) the chain is Extracellular. Residues 397-418 (FRFLDILIYSAPPGMPMLIAIT) form a helical membrane-spanning segment. Residues 419-887 (NFVGLKRLKN…NSVEIFKGYL (469 aa)) are Cytoplasmic-facing. D451 functions as the 4-aspartylphosphate intermediate in the catalytic mechanism. Positions 827 and 831 each coordinate Mg(2+). Residues 888 to 906 (QVALLRYLGFLTLAYFYSS) form a helical membrane-spanning segment. Residues 907–915 (YSSGQMDWQ) lie on the Extracellular side of the membrane. A helical membrane pass occupies residues 916-931 (ALASGYFLVYLILGCN). Over 932-948 (TPLKKLEKSVFDDNLFS) the chain is Cytoplasmic. The chain crosses the membrane as a helical span at residues 949 to 972 (IYNVTSVLFGFTLHILSIVGCVES). Residues 973-994 (LHASPIYKEVNSLDAENNFQFE) lie on the Extracellular side of the membrane. The helical transmembrane segment at 995-1018 (TQHNTVLNFNILINFFYVIISNHI) threads the bilayer. The Cytoplasmic portion of the chain corresponds to 1019 to 1030 (GKPMKDRYYKNT). Residues 1031–1050 (IAIYYDLGLIYTCKCMILQV) traverse the membrane as a helical segment. Over 1051–1101 (LLILEHTHHGLIFLILLLDQEFSSSLTVQVYFSLPMNLFLPEEFSLNFTQE) the chain is Extracellular. The chain crosses the membrane as a helical span at residues 1102-1124 (VKKEKELLICNSSSTILEVDYNL). The Cytoplasmic portion of the chain corresponds to 1125–1133 (RLNYFQQNF).

Belongs to the cation transport ATPase (P-type) (TC 3.A.3) family. Type V subfamily.

Its subcellular location is the membrane. The catalysed reaction is ATP + H2O = ADP + phosphate + H(+). This Tetrahymena thermophila protein is Probable cation-transporting ATPase 9 (TPA9).